A 585-amino-acid polypeptide reads, in one-letter code: uncharacterized protein (585 aa).

This sequence to E.coli YejM.

This is an uncharacterized protein from Haemophilus influenzae (strain ATCC 51907 / DSM 11121 / KW20 / Rd).